Consider the following 446-residue polypeptide: Methanol utilization control sensor protein MoxY (446 aa).

Helical transmembrane passes span 1–21 (MGLA…ILIV), 101–121 (WFSA…THYP), and 144–164 (FSII…LAFL). In terms of domain architecture, HAMP spans 167–219 (TLLTRRLQSVQAAMAQMQDGRLSVRAPDDRLTEFADLAAGVNALASHLQAEQA). The segment at 390 to 409 (TDNGKGPQSGTGRPTPGFGQ) is disordered.

The protein resides in the cell inner membrane. Functionally, member of the two-component regulatory system MoxY/MoxX probably involved in the regulation of the methanol dehydrogenase expression. May function as a membrane-associated protein kinase that phosphorylates MoxX in response to environmental signals. This Paracoccus denitrificans protein is Methanol utilization control sensor protein MoxY (moxY).